Reading from the N-terminus, the 220-residue chain is dITP/XTP pyrophosphatase (220 aa).

13–18 contacts substrate; it reads SHNAGK. Positions 45 and 74 each coordinate Mg(2+). The active-site Proton acceptor is the Asp74. Residues Ser75, 163 to 166, Lys186, and 199 to 200 each bind substrate; these read FGYD and HR.

Belongs to the HAM1 NTPase family. As to quaternary structure, homodimer. Requires Mg(2+) as cofactor.

The catalysed reaction is XTP + H2O = XMP + diphosphate + H(+). It carries out the reaction dITP + H2O = dIMP + diphosphate + H(+). The enzyme catalyses ITP + H2O = IMP + diphosphate + H(+). Functionally, pyrophosphatase that catalyzes the hydrolysis of nucleoside triphosphates to their monophosphate derivatives, with a high preference for the non-canonical purine nucleotides XTP (xanthosine triphosphate), dITP (deoxyinosine triphosphate) and ITP. Seems to function as a house-cleaning enzyme that removes non-canonical purine nucleotides from the nucleotide pool, thus preventing their incorporation into DNA/RNA and avoiding chromosomal lesions. The chain is dITP/XTP pyrophosphatase from Mesorhizobium japonicum (strain LMG 29417 / CECT 9101 / MAFF 303099) (Mesorhizobium loti (strain MAFF 303099)).